The chain runs to 266 residues: Putative zinc finger protein 034R (266 aa).

A disordered region spans residues 84–176; that stretch reads SPTKSVDKAA…GPKRDSTQQP (93 aa). A compositionally biased stretch (basic and acidic residues) spans 88–100; the sequence is SVDKAAQKEKKMP. Polar residues-rich tracts occupy residues 105–119 and 160–176; these read KPTT…QGIL and GVSQ…TQQP. The C3H1-type zinc-finger motif lies at 180–192; that stretch reads CKSVLKQAKCYFG.

It belongs to the IIV-6 077L family.

The protein is Putative zinc finger protein 034R of Aedes vexans (Inland floodwater mosquito).